A 156-amino-acid polypeptide reads, in one-letter code: Transcription antitermination protein NusB (156 aa).

The protein belongs to the NusB family.

In terms of biological role, involved in transcription antitermination. Required for transcription of ribosomal RNA (rRNA) genes. Binds specifically to the boxA antiterminator sequence of the ribosomal RNA (rrn) operons. This chain is Transcription antitermination protein NusB, found in Mycobacterium tuberculosis (strain CDC 1551 / Oshkosh).